Reading from the N-terminus, the 187-residue chain is MNLQHHFLIAMPALQDPIFRRSVVYICEHNQNGAMGIIVNKPLENLQIEGILEKLKITPESRDSAIRLDKAVMLGGPLAEDRGFILHTPPSRFASSIRISDNTVITTSRDVLETLGTQQQPSDVLVALGYASWDKGQLEQELLDNAWLTAPADLNILFKTPIAERWREAAKLIGIDILTMPGVAGHA.

It belongs to the UPF0301 (AlgH) family.

The sequence is that of UPF0301 protein YqgE from Salmonella paratyphi A (strain ATCC 9150 / SARB42).